A 315-amino-acid polypeptide reads, in one-letter code: Porphobilinogen deaminase (315 aa).

At cysteine 234 the chain carries S-(dipyrrolylmethanemethyl)cysteine.

It belongs to the HMBS family. As to quaternary structure, monomer. Dipyrromethane is required as a cofactor.

It carries out the reaction 4 porphobilinogen + H2O = hydroxymethylbilane + 4 NH4(+). Its pathway is porphyrin-containing compound metabolism; protoporphyrin-IX biosynthesis; coproporphyrinogen-III from 5-aminolevulinate: step 2/4. In terms of biological role, tetrapolymerization of the monopyrrole PBG into the hydroxymethylbilane pre-uroporphyrinogen in several discrete steps. The protein is Porphobilinogen deaminase (hemC) of Mycobacterium leprae (strain TN).